The chain runs to 187 residues: Probable chorismate pyruvate-lyase (187 aa).

Substrate is bound by residues Arg-76, Leu-114, and Glu-173.

The protein belongs to the UbiC family.

Its subcellular location is the cytoplasm. The catalysed reaction is chorismate = 4-hydroxybenzoate + pyruvate. It participates in cofactor biosynthesis; ubiquinone biosynthesis. Removes the pyruvyl group from chorismate, with concomitant aromatization of the ring, to provide 4-hydroxybenzoate (4HB) for the ubiquinone pathway. In Shewanella amazonensis (strain ATCC BAA-1098 / SB2B), this protein is Probable chorismate pyruvate-lyase.